Reading from the N-terminus, the 407-residue chain is Putative mannan endo-1,4-beta-mannosidase 9 (407 aa).

Residues 1–31 (MGSKRRVILLPTLGVVVLAIAAAVLLHAGEA) form the signal peptide. Residues Trp95 and Asn208 each coordinate substrate. Glu209 functions as the Proton donor in the catalytic mechanism. Tyr284 contacts substrate. Residue Glu324 is the Nucleophile of the active site. Trp366 is a binding site for substrate.

The protein belongs to the glycosyl hydrolase 5 (cellulase A) family. In terms of tissue distribution, expression not detected.

The protein resides in the secreted. It catalyses the reaction Random hydrolysis of (1-&gt;4)-beta-D-mannosidic linkages in mannans, galactomannans and glucomannans.. This is Putative mannan endo-1,4-beta-mannosidase 9 (MAN9) from Oryza sativa subsp. japonica (Rice).